A 998-amino-acid chain; its full sequence is Regulator of telomere elongation helicase 1 homolog (998 aa).

The Helicase ATP-binding domain maps to 7–324 (AGIPVHFPFE…KEMLLELEKA (318 aa)). 42–49 (SPTGTGKT) contacts ATP. The [4Fe-4S] cluster site is built by C148, C166, C175, and C211. The DEAH box signature appears at 254 to 257 (DEAH). The interval 426–454 (QNAGKPAPKQQQQGGWLGKGNNTSNSSSS) is disordered. T887 carries the phosphothreonine modification.

The protein belongs to the helicase family. RAD3/XPD subfamily.

The protein resides in the nucleus. The catalysed reaction is ATP + H2O = ADP + phosphate + H(+). A probable ATP-dependent DNA helicase implicated in DNA repair and the maintenance of genomic stability. Acts as an anti-recombinase to counteract toxic recombination and limit crossover during meiosis. Regulates meiotic recombination and crossover homeostasis by physically dissociating strand invasion events and thereby promotes noncrossover repair by meiotic synthesis dependent strand annealing (SDSA) as well as disassembly of D loop recombination intermediates. This is Regulator of telomere elongation helicase 1 homolog from Drosophila willistoni (Fruit fly).